Consider the following 237-residue polypeptide: Ribosomal RNA small subunit methyltransferase G (237 aa).

S-adenosyl-L-methionine-binding positions include Gly78, Phe83, 129–130 (AE), and Arg148. A disordered region spans residues 218–237 (KKETPNKFPRKAGMPNKRPL).

Belongs to the methyltransferase superfamily. RNA methyltransferase RsmG family.

It localises to the cytoplasm. In terms of biological role, specifically methylates the N7 position of a guanine in 16S rRNA. The chain is Ribosomal RNA small subunit methyltransferase G from Streptococcus suis (strain 98HAH33).